The primary structure comprises 481 residues: Squalene epoxidase erg1 (481 aa).

Residues 28–48 (HADVVIIGAGVLGCALAVALG) traverse the membrane as a helical segment. FAD-binding positions include 38-39 (VL), 58-59 (EA), Arg-66, and Arg-138. N-linked (GlcNAc...) asparagine glycosylation occurs at Asn-146. FAD-binding residues include Asp-319 and Met-332. The next 2 helical transmembrane spans lie at 425–445 (KPSVLFVHFFSVALLSLWVLL) and 452–472 (LFPVALFKCIMTFWTACVVIF).

The protein belongs to the squalene monooxygenase family. Requires FAD as cofactor.

The protein resides in the endoplasmic reticulum membrane. It is found in the microsome membrane. It catalyses the reaction squalene + reduced [NADPH--hemoprotein reductase] + O2 = (S)-2,3-epoxysqualene + oxidized [NADPH--hemoprotein reductase] + H2O + H(+). Its pathway is steroid metabolism; ergosterol biosynthesis. Its function is as follows. Squalene epoxidase; part of the third module of ergosterol biosynthesis pathway that includes the late steps of the pathway. Erg1 catalyzes the epoxidation of squalene into 2,3-epoxysqualene. The third module or late pathway involves the ergosterol synthesis itself through consecutive reactions that mainly occur in the endoplasmic reticulum (ER) membrane. Firstly, the squalene synthase erg9 catalyzes the condensation of 2 farnesyl pyrophosphate moieties to form squalene, which is the precursor of all steroids. Squalene synthase is crucial for balancing the incorporation of farnesyl diphosphate (FPP) into sterol and nonsterol isoprene synthesis. Secondly, squalene is converted into lanosterol by the consecutive action of the squalene epoxidase erg1 and the lanosterol synthase erg7. Then, the delta(24)-sterol C-methyltransferase erg6 methylates lanosterol at C-24 to produce eburicol. Eburicol is the substrate of the sterol 14-alpha demethylase encoded by cyp51A and cyp51B, to yield 4,4,24-trimethyl ergosta-8,14,24(28)-trienol. The C-14 reductase erg24 then reduces the C14=C15 double bond which leads to 4,4-dimethylfecosterol. A sequence of further demethylations at C-4, involving the C-4 demethylation complex containing the C-4 methylsterol oxidases erg25A or erg25B, the sterol-4-alpha-carboxylate 3-dehydrogenase erg26 and the 3-keto-steroid reductase erg27, leads to the production of fecosterol via 4-methylfecosterol. The C-8 sterol isomerase erg2 then catalyzes the reaction which results in unsaturation at C-7 in the B ring of sterols and thus converts fecosterol to episterol. The sterol-C5-desaturase erg3B then catalyzes the introduction of a C-5 double bond in the B ring to produce 5-dehydroepisterol. The 2 other sterol-C5-desaturases, erg3A and erg3C, seem to be less important in ergosterol biosynthesis. The C-22 sterol desaturase erg5 further converts 5-dehydroepisterol into ergosta-5,7,22,24(28)-tetraen-3beta-ol by forming the C-22(23) double bond in the sterol side chain. Finally, ergosta-5,7,22,24(28)-tetraen-3beta-ol is substrate of the C-24(28) sterol reductases erg4A and erg4B to produce ergosterol. Possible alternative sterol biosynthetic pathways might exist from fecosterol to ergosterol, depending on the activities of the erg3 isoforms. The polypeptide is Squalene epoxidase erg1 (Aspergillus fumigatus (strain ATCC MYA-4609 / CBS 101355 / FGSC A1100 / Af293) (Neosartorya fumigata)).